The following is a 149-amino-acid chain: Myosin light chain 1 (149 aa).

3 EF-hand domains span residues 2-37, 81-116, and 117-149; these read SATR…IGYN, AKTE…LGEK, and LTDA…VLRQ. The Ca(2+) site is built by aspartate 15, aspartate 94, threonine 98, lysine 100, and aspartate 105. A Glycyl lysine isopeptide (Lys-Gly) (interchain with G-Cter in ubiquitin) cross-link involves residue lysine 116. Ca(2+) contacts are provided by aspartate 123, lysine 127, and aspartate 132.

In terms of assembly, interacts with MYO1, MYO2 and IQG1 by binding to their IQ domains. Interacts with SEC4.

It localises to the bud neck. The protein resides in the bud tip. Functionally, essential light chain for the class II conventional myosin MYO1. Also acts as light chain for the class V unconventional myosin MYO2 and for IQG1. Involved in the assembly of the contractile actomyosin ring at the bud neck during cytokinesis by recruiting IQG1 to the bud neck. Also required for chitin and MYO2-dependent secretory vesicle deposition to the center of the bud neck for septum formation. May stabilize MYO2 by binding to its IQ domains. Its major function is probably not to regulate MYO1 activity, but rather to coordinate actin ring formation and targeted membrane deposition during cytokinesis via its interactions with MYO1, IQG1 and MYO2. In Saccharomyces cerevisiae (strain ATCC 204508 / S288c) (Baker's yeast), this protein is Myosin light chain 1 (MLC1).